Here is a 210-residue protein sequence, read N- to C-terminus: HTH-type transcriptional repressor FabR (210 aa).

Residues 10 to 70 enclose the HTH tetR-type domain; it reads KTRRSLVEAA…TMVDESGLML (61 aa). The H-T-H motif DNA-binding region spans 33-52; sequence SLREVAREAGIAPTSFYRHF.

In terms of assembly, homodimer.

It is found in the cytoplasm. Represses the transcription of fabB, involved in unsaturated fatty acid (UFA) biosynthesis. By controlling UFA production, FabR directly influences the physical properties of the membrane bilayer. The chain is HTH-type transcriptional repressor FabR from Klebsiella pneumoniae subsp. pneumoniae (strain ATCC 700721 / MGH 78578).